The following is a 392-amino-acid chain: Dual-specificity RNA methyltransferase RlmN (392 aa).

The active-site Proton acceptor is Glu-116. The region spanning 122–364 is the Radical SAM core domain; sequence EEGRGTLCVS…SPIRTPRGED (243 aa). Cysteines 129 and 369 form a disulfide. Cys-136, Cys-140, and Cys-143 together coordinate [4Fe-4S] cluster. S-adenosyl-L-methionine-binding positions include 195–196, Ser-227, 249–251, and Asn-326; these read GE and SFH. Cys-369 serves as the catalytic S-methylcysteine intermediate.

It belongs to the radical SAM superfamily. RlmN family. [4Fe-4S] cluster is required as a cofactor.

It localises to the cytoplasm. The catalysed reaction is adenosine(2503) in 23S rRNA + 2 reduced [2Fe-2S]-[ferredoxin] + 2 S-adenosyl-L-methionine = 2-methyladenosine(2503) in 23S rRNA + 5'-deoxyadenosine + L-methionine + 2 oxidized [2Fe-2S]-[ferredoxin] + S-adenosyl-L-homocysteine. It carries out the reaction adenosine(37) in tRNA + 2 reduced [2Fe-2S]-[ferredoxin] + 2 S-adenosyl-L-methionine = 2-methyladenosine(37) in tRNA + 5'-deoxyadenosine + L-methionine + 2 oxidized [2Fe-2S]-[ferredoxin] + S-adenosyl-L-homocysteine. In terms of biological role, specifically methylates position 2 of adenine 2503 in 23S rRNA and position 2 of adenine 37 in tRNAs. m2A2503 modification seems to play a crucial role in the proofreading step occurring at the peptidyl transferase center and thus would serve to optimize ribosomal fidelity. This Cereibacter sphaeroides (strain ATCC 17025 / ATH 2.4.3) (Rhodobacter sphaeroides) protein is Dual-specificity RNA methyltransferase RlmN.